Consider the following 453-residue polypeptide: Odorant receptor 83a (453 aa).

Residues 1 to 28 (MKSTFKEERIKDDSKRRDLFVFVRQTMC) lie on the Cytoplasmic side of the membrane. A helical membrane pass occupies residues 29 to 49 (IAAMYPFGYYVNGSGVLAVLV). The Extracellular segment spans residues 50–85 (RFCDLTYELFNYFVSVHIAGLYICTIYINYGQGDLD). A helical transmembrane segment spans residues 86-106 (FFVNCLIQTIIYLWTIAMKLY). Over 107-148 (FRRFRPGLLNTILSNINDEYETRSAVGFSFVTMAGSYRMSKL) the chain is Cytoplasmic. A helical membrane pass occupies residues 149-169 (WIKTYVYCCYIGTIFWLALPI). The Extracellular portion of the chain corresponds to 170-203 (AYRDRSLPLACWYPFDYTQPGVYEVVFLLQAMGQ). The helical transmembrane segment at 204–224 (IQVAASFASSSGLHMVLCVLI) threads the bilayer. At 225–322 (SGQYDVLFCS…ALKKIESFYS (98 aa)) the chain is on the cytoplasmic side. A helical membrane pass occupies residues 323–343 (PIWFVKIGEVTFLMCLVAFVS). The Extracellular portion of the chain corresponds to 344 to 359 (TKSTAANSFMRMVSLG). The chain crosses the membrane as a helical span at residues 360 to 380 (QYLLLVLYELFIICYFADIVF). Topologically, residues 381–408 (QNSQRCGEALWRSPWQRHLKDVRSDYMF) are cytoplasmic. Residues 409–429 (FMLNSRRQFQLTAGKISNLNV) form a helical membrane-spanning segment. At 430–453 (DRFRGTITTAFSFLTLLQKMDARE) the chain is on the extracellular side.

Belongs to the insect chemoreceptor superfamily. Heteromeric odorant receptor channel (TC 1.A.69) family. Or2a subfamily. In terms of assembly, interacts with Orco. Complexes exist early in the endomembrane system in olfactory sensory neurons (OSNs), coupling these complexes to the conserved ciliary trafficking pathway.

It localises to the cell membrane. Odorant receptor which mediates acceptance or avoidance behavior, depending on its substrates. The odorant receptor repertoire encodes a large collection of odor stimuli that vary widely in identity, intensity, and duration. May form a complex with Orco to form odorant-sensing units, providing sensitive and prolonged odorant signaling and calcium permeability. Involved in the behavioral responses to pentanol, ethyl acetate, and propyl acetate. This Drosophila melanogaster (Fruit fly) protein is Odorant receptor 83a (Or83a).